Reading from the N-terminus, the 495-residue chain is Glutamate--tRNA ligase (495 aa).

The short motif at 14–24 (PSPTGYLHIGS) is the 'HIGH' region element. The 'KMSKS' region motif lies at 255-259 (KLSKR). Lysine 258 provides a ligand contact to ATP.

It belongs to the class-I aminoacyl-tRNA synthetase family. Glutamate--tRNA ligase type 1 subfamily. Monomer.

The protein localises to the cytoplasm. The catalysed reaction is tRNA(Glu) + L-glutamate + ATP = L-glutamyl-tRNA(Glu) + AMP + diphosphate. Catalyzes the attachment of glutamate to tRNA(Glu) in a two-step reaction: glutamate is first activated by ATP to form Glu-AMP and then transferred to the acceptor end of tRNA(Glu). This is Glutamate--tRNA ligase from Herpetosiphon aurantiacus (strain ATCC 23779 / DSM 785 / 114-95).